A 421-amino-acid polypeptide reads, in one-letter code: Large ribosomal subunit protein uL4 (421 aa).

Ala-2 bears the N-acetylalanine mark. At Lys-14 the chain carries N6-acetyllysine. The residue at position 97 (Arg-97) is an Omega-N-methylarginine. At Lys-106 the chain carries N6-acetyllysine. Residue Lys-239 forms a Glycyl lysine isopeptide (Lys-Gly) (interchain with G-Cter in SUMO2) linkage. At Lys-259 the chain carries N6-acetyllysine. Thr-266 bears the Phosphothreonine mark. Ser-290 carries the phosphoserine modification. Citrulline is present on Arg-300. Residue Lys-327 forms a Glycyl lysine isopeptide (Lys-Gly) (interchain with G-Cter in SUMO2) linkage. Residues Lys-333 and Lys-353 each carry the N6-acetyllysine modification. The segment at Glu-359 to Ala-421 is disordered. Position 361 is an N6-acetyllysine; alternate (Lys-361). Lys-361 is covalently cross-linked (Glycyl lysine isopeptide (Lys-Gly) (interchain with G-Cter in SUMO1); alternate). Ser-362 bears the Phosphoserine mark. A compositionally biased stretch (basic residues) spans Pro-368–Val-391. Positions Pro-401–Ala-421 are enriched in basic and acidic residues.

The protein belongs to the universal ribosomal protein uL4 family. As to quaternary structure, component of the large ribosomal subunit. May bind IPO9 with low affinity. Interacts with RBM3. Post-translationally, citrullinated by PADI4.

Its subcellular location is the cytoplasm. Functionally, component of the large ribosomal subunit. The ribosome is a large ribonucleoprotein complex responsible for the synthesis of proteins in the cell. The chain is Large ribosomal subunit protein uL4 (RPL4) from Canis lupus familiaris (Dog).